The sequence spans 337 residues: C5a anaphylatoxin chemotactic receptor 2 (337 aa).

Residues 1-38 (MGNDSVSYEYGDYSDLSDRPVDCLDGACLAIDPLRVAP) lie on the Extracellular side of the membrane. The N-linked (GlcNAc...) asparagine glycan is linked to asparagine 3. A helical transmembrane segment spans residues 39–61 (LPLYAAIFLVGVPGNAMVAWVAG). The Cytoplasmic portion of the chain corresponds to 62–72 (KVARRRVGATW). The chain crosses the membrane as a helical span at residues 73 to 95 (LLHLAVADLLCCLSLPILAVPIA). Over 96 to 114 (RGGHWPYGAVGCRALPSII) the chain is Extracellular. A disulfide bond links cysteine 107 and cysteine 186. Residues 115–137 (LLTMYASVLLLAALSADLCFLAL) form a helical membrane-spanning segment. The Cytoplasmic portion of the chain corresponds to 138–149 (GPAWWSTVQRAC). A helical transmembrane segment spans residues 150 to 172 (GVQVACGAAWTLALLLTVPSAIY). Residues 173-202 (RRLHQEHFPARLQCVVDYGGSSSTENAVTA) are Extracellular-facing. A helical membrane pass occupies residues 203 to 225 (IRFLFGFLGPLVAVASCHSALLC). The Cytoplasmic segment spans residues 226 to 237 (WAARRCRPLGTA). The chain crosses the membrane as a helical span at residues 238–260 (IVVGFFVCWAPYHLLGLVLTVAA). Residues 261 to 274 (PNSALLARALRAEP) are Extracellular-facing. A helical transmembrane segment spans residues 275 to 294 (LIVGLALAHSCLNPMLFLYF). The Cytoplasmic portion of the chain corresponds to 295 to 337 (GRAQLRRSLPAACHWALRESQGQDESVDSKKSTSHDLVSEMEV). Phosphoserine is present on serine 320.

It belongs to the G-protein coupled receptor 1 family. Interacts with C3 (the anaphylatoxin peptide C3a and the adipogenic hormone ASP); the interaction occurs with higher affinity for ASP, enhancing the phosphorylation and activation of GPR77, recruitment of ARRB2 to the cell surface and endocytosis of GRP77. As to expression, frontal cortex, hippocampus, hypothalamus, pons and liver.

It is found in the cell membrane. Functionally, receptor for the chemotactic and inflammatory C3a, C4a and C5a anaphylatoxin peptides and also for their dearginated forms ASP/C3adesArg, C4adesArg and C5adesArg respectively. Couples weakly to G(i)-mediated signaling pathways. This chain is C5a anaphylatoxin chemotactic receptor 2 (C5AR2), found in Homo sapiens (Human).